Here is a 217-residue protein sequence, read N- to C-terminus: 3,4-dihydroxy-2-butanone 4-phosphate synthase (217 aa).

Residues 37-38 (RE), aspartate 42, 150-154 (RGGHT), and glutamate 174 contribute to the D-ribulose 5-phosphate site. Position 38 (glutamate 38) interacts with Mg(2+). Residue histidine 153 participates in Mg(2+) binding.

The protein belongs to the DHBP synthase family. As to quaternary structure, homodimer. It depends on Mg(2+) as a cofactor. Mn(2+) is required as a cofactor.

It catalyses the reaction D-ribulose 5-phosphate = (2S)-2-hydroxy-3-oxobutyl phosphate + formate + H(+). Its pathway is cofactor biosynthesis; riboflavin biosynthesis; 2-hydroxy-3-oxobutyl phosphate from D-ribulose 5-phosphate: step 1/1. Catalyzes the conversion of D-ribulose 5-phosphate to formate and 3,4-dihydroxy-2-butanone 4-phosphate. The chain is 3,4-dihydroxy-2-butanone 4-phosphate synthase from Salmonella paratyphi A (strain ATCC 9150 / SARB42).